A 600-amino-acid chain; its full sequence is Elongation factor 4 (600 aa).

The tr-type G domain occupies 5–187; the sequence is SRIRNFSIIA…AIVTRLPPPK (183 aa). GTP-binding positions include 17–22 and 134–137; these read DHGKST and NKID.

This sequence belongs to the TRAFAC class translation factor GTPase superfamily. Classic translation factor GTPase family. LepA subfamily.

The protein resides in the cell inner membrane. It catalyses the reaction GTP + H2O = GDP + phosphate + H(+). In terms of biological role, required for accurate and efficient protein synthesis under certain stress conditions. May act as a fidelity factor of the translation reaction, by catalyzing a one-codon backward translocation of tRNAs on improperly translocated ribosomes. Back-translocation proceeds from a post-translocation (POST) complex to a pre-translocation (PRE) complex, thus giving elongation factor G a second chance to translocate the tRNAs correctly. Binds to ribosomes in a GTP-dependent manner. In Rhodospirillum centenum (strain ATCC 51521 / SW), this protein is Elongation factor 4.